The primary structure comprises 535 residues: Nuclear/nucleolar GTPase 2 (535 aa).

The segment at 1-42 is disordered; the sequence is MAKKKERAVNVSGKPRHSLDVNRANDKKGAGGGAGGGGGGRS. A compositionally biased stretch (basic and acidic residues) spans 17–29; the sequence is HSLDVNRANDKKG. The segment covering 30–41 has biased composition (gly residues); the sequence is AGGGAGGGGGGR. The CP-type G domain maps to 213-374; it reads WGELYKVIDS…LIDCPGVVYQ (162 aa). The interval 261 to 264 is G4; sequence NKCD. The tract at residues 290–292 is G5; the sequence is SIN. Positions 323–330 are G1; sequence GYPNVGKS. Residues 349–353 form a G2 region; it reads GETKV. The interval 367–370 is G3; the sequence is DCPG. Residues 464-495 are disordered; the sequence is FFVPPPQQGEDSPSETAEPVDKSDEEGVSSDR.

The protein belongs to the TRAFAC class YlqF/YawG GTPase family. RsgA subfamily.

It localises to the nucleus. It is found in the nucleolus. GTPase involved in pre-60S ribosomal subunit maturation. The chain is Nuclear/nucleolar GTPase 2 from Oryza sativa subsp. indica (Rice).